We begin with the raw amino-acid sequence, 416 residues long: CapZ-interacting protein (416 aa).

Disordered regions lie at residues 1 to 84 and 98 to 416; these read MEER…KSSP and AALL…DTKM. The span at 8 to 20 shows a compositional bias: polar residues; the sequence is TNANVDNSASPSV. A Phosphoserine modification is found at Ser17. Ser68 bears the Phosphoserine; by MAPK8; in vitro mark. At Ser82 the chain carries Phosphoserine. Position 83 is a phosphoserine; by MAPK8; in vitro (Ser83). Phosphoserine is present on Ser105. A Phosphoserine; by MAPK12 and MAPK13 modification is found at Ser108. A phosphoserine mark is found at Ser116, Ser120, and Ser123. The residue at position 124 (Thr124) is a Phosphothreonine. 4 positions are modified to phosphoserine: Ser126, Ser127, Ser135, and Ser143. Basic residues predominate over residues 159–176; sequence VRTRGSIKRRPPSRRFRR. Ser177 is modified (phosphoserine). Ser179 carries the post-translational modification Phosphoserine; by MAPKAPK2 and MAPKAPK3. Phosphoserine; by MAPK8; in vitro is present on Ser216. The 104-residue stretch at 227–330 folds into the RCSD domain; it reads GVRTLGPAEK…RVQNEEVGPE (104 aa). Position 244 is a phosphoserine; by MAPKAPK2 or MAPKAPK3; in vitro (Ser244). Basic and acidic residues predominate over residues 244 to 273; that stretch reads SRTEKQEEDRATEEAKNGEKARRSSEEVDG. A phosphoserine mark is found at Ser267, Ser268, Ser284, Ser298, and Ser333. A compositionally biased stretch (basic and acidic residues) spans 292 to 349; sequence AENRCGSPREEKPAGEEAEMEKATEVKGERVQNEEVGPEHDSQETKKLEEGAAVKETP. Residue Thr336 is modified to Phosphothreonine. Ser351 carries the phosphoserine modification. Basic and acidic residues predominate over residues 360-372; the sequence is DVPKQEKGKEKQQ. The span at 382 to 397 shows a compositional bias: polar residues; it reads SPQTGPAQLETSSEVQ.

Interacts with CAPZA2 and CAPZB. Post-translationally, dephosphorylation results in its dissociation from CAPZA2. In terms of tissue distribution, highly expressed in skeletal muscle and more weakly in cardiac muscle. Also expressed in several lymphoid organs, including spleen, thymus, peripheral blood leukocytes, lymph node and bone marrow.

Its function is as follows. Stress-induced phosphorylation of CAPZIP may regulate the ability of F-actin-capping protein to remodel actin filament assembly. The protein is CapZ-interacting protein (RCSD1) of Homo sapiens (Human).